The primary structure comprises 210 residues: Thymidylate kinase (210 aa).

10-17 (GPEGAGKS) is a binding site for ATP.

Belongs to the thymidylate kinase family.

It carries out the reaction dTMP + ATP = dTDP + ADP. Its function is as follows. Phosphorylation of dTMP to form dTDP in both de novo and salvage pathways of dTTP synthesis. In Pseudomonas aeruginosa (strain LESB58), this protein is Thymidylate kinase.